We begin with the raw amino-acid sequence, 444 residues long: Protein CLP1 homolog (444 aa).

Residues E33, K72, and D140–T145 contribute to the ATP site.

This sequence belongs to the Clp1 family. Clp1 subfamily. In terms of assembly, interacts with PCFS4 and SYM5. Forms a complex with cleavage and polyadenylation specificity factor (CPSF) subunits CPSF30, CPSF100, PCFS1, PCFS4, PCFS5, CPSF160 and FY.

The protein resides in the nucleus. In terms of biological role, required for endonucleolytic cleavage during polyadenylation-dependent pre-mRNA 3'-end formation. Functions in gametophyte, embryo and postembryotic development. In Arabidopsis thaliana (Mouse-ear cress), this protein is Protein CLP1 homolog (CLPS3).